A 414-amino-acid chain; its full sequence is Snake venom metalloproteinase (414 aa).

Positions 1–20 (MIEVLLVTICLAVFPYQGSS) are cleaved as a signal peptide. A propeptide spanning residues 21 to 190 (IILESGNVND…KASDLNFNSD (170 aa)) is cleaved from the precursor. Q191 carries the post-translational modification Pyrrolidone carboxylic acid. Positions 197-393 (RYVELVIVAD…YKPQCILNKP (197 aa)) constitute a Peptidase M12B domain. Residues E200 and D284 each contribute to the Ca(2+) site. Intrachain disulfides connect C308/C388 and C348/C355. H333 contacts Zn(2+). E334 is a catalytic residue. 2 residues coordinate Zn(2+): H337 and H343. Residues C388 and N391 each contribute to the Ca(2+) site. Residues 394-414 (LRIDPVSTPVSGNELLEAGEE) constitute a propeptide that is removed on maturation.

It belongs to the venom metalloproteinase (M12B) family. P-I subfamily. In terms of assembly, monomer. It depends on Zn(2+) as a cofactor. Expressed by the venom gland.

It localises to the secreted. Its function is as follows. Snake venom metalloproteinase that impairs hemostasis in the envenomed animal. The chain is Snake venom metalloproteinase from Crotalus molossus molossus (Northern black-tailed rattlesnake).